A 258-amino-acid polypeptide reads, in one-letter code: MTEVVQNVAQTHITVENLNLWYGEKQALKNVSLKIPRNSVTALIGPSGCGKSTFIRCLNRMNDLVKNCRIEGKVLIENEDIYGTDVDVVELRKQVGMVFQKPNPFPMSIYDNVAYGPRIHGVNKKDIDGVVRNALRSAALFEETSDRLKSPALSLSGGQQQRLCIARTLAVKPRIILFDEPTSALDPISTARIEDLIMNLKKDYTIVIVTHNMQQAARISDYTGFFLMGELVEFGQTRQIFHSPREKSTEDYITGRFG.

An ABC transporter domain is found at 13 to 253 (ITVENLNLWY…PREKSTEDYI (241 aa)). 45–52 (GPSGCGKS) contributes to the ATP binding site.

Belongs to the ABC transporter superfamily. Phosphate importer (TC 3.A.1.7) family. The complex is composed of two ATP-binding proteins (PstB), two transmembrane proteins (PstC and PstA) and a solute-binding protein (PstS).

Its subcellular location is the cell membrane. The enzyme catalyses phosphate(out) + ATP + H2O = ADP + 2 phosphate(in) + H(+). Functionally, part of the ABC transporter complex PstSACB involved in phosphate import. Responsible for energy coupling to the transport system. This chain is Phosphate import ATP-binding protein PstB, found in Methanosarcina mazei (strain ATCC BAA-159 / DSM 3647 / Goe1 / Go1 / JCM 11833 / OCM 88) (Methanosarcina frisia).